Consider the following 401-residue polypeptide: Mu-type opioid receptor (401 aa).

Topologically, residues 1–69 (MDSSAVPANA…CPPTGSPSMI (69 aa)) are extracellular. 5 N-linked (GlcNAc...) asparagine glycosylation sites follow: asparagine 9, asparagine 12, asparagine 34, asparagine 41, and asparagine 49. The chain crosses the membrane as a helical span at residues 70 to 94 (TAITIMALYSIVCVVGLFGNFLVMY). Residues 95–107 (VIVRYTKMKTATN) are Cytoplasmic-facing. A helical membrane pass occupies residues 108–132 (IYIFNLALADALATSTLPFQSVNYL). The Extracellular segment spans residues 133–143 (MGTWPFGTILC). A disulfide bond links cysteine 143 and cysteine 220. A helical transmembrane segment spans residues 144–166 (KIVISIDYYNMFTSIFTLCTMSV). The Cytoplasmic segment spans residues 167–186 (DRYIAVCHPVKALDFRTPRN). Residue tyrosine 169 is modified to Phosphotyrosine. A helical transmembrane segment spans residues 187–208 (AKIINVCNWILSSAIGLPVMFM). Residues 209–231 (ATTKYRHGSIDCTLTFSHPTWYW) are Extracellular-facing. The helical transmembrane segment at 232 to 256 (ENLLKICVFIFAFIMPVLIITVCYG) threads the bilayer. Over 257–280 (LMILRLKSVRMLSGSKEKDRNLRR) the chain is Cytoplasmic. The helical transmembrane segment at 281-307 (ITRMVLVVVAVFIVCWTPIHIYVIIKA) threads the bilayer. Residues 308 to 315 (LVTIPETT) are Extracellular-facing. A helical membrane pass occupies residues 316–339 (FQTVSWHFCIALGYTNSCLNPVLY). Positions 335-339 (NPVLY) match the NPxxY; plays a role in stabilizing the activated conformation of the receptor motif. Residues 340-401 (AFLDENFKRC…NLEAETAPLP (62 aa)) lie on the Cytoplasmic side of the membrane. Cysteine 354 is lipidated: S-palmitoyl cysteine. The segment at 365–388 (NSTRIRQNTRDHPSTANTVDRTNH) is disordered. A Phosphoserine modification is found at serine 366. Position 373 is a phosphothreonine (threonine 373). Serine 378 carries the phosphoserine modification. Position 397 is a phosphothreonine (threonine 397).

The protein belongs to the G-protein coupled receptor 1 family. Forms homooligomers and heterooligomers with other GPCRs, such as OPRD1, OPRK1, OPRL1, NPFFR2, ADRA2A, SSTR2, CNR1 and CCR5 (probably in dimeric forms). Interacts with heterotrimeric G proteins; interaction with a heterotrimeric complex containing GNAI1, GNB1 and GNG2 stabilizes the active conformation of the receptor and increases its affinity for endomorphin-2, the synthetic opioid peptide DAMGO and for morphinan agonists. Interacts with PPL; the interaction disrupts agonist-mediated G-protein activation. Interacts (via C-terminus) with DNAJB4 (via C-terminus). Interacts with calmodulin; the interaction inhibits the constitutive activity of OPRM1; it abolishes basal and attenuates agonist-stimulated G-protein coupling. Interacts with FLNA, PLD2, RANBP9 and WLS and GPM6A. Interacts with RTP4. Interacts with SYP and GNAS. Interacts with RGS9, RGS17, RGS20, RGS4, PPP1R9B and HINT1. Post-translationally, phosphorylated. Differentially phosphorylated in basal and agonist-induced conditions. Agonist-mediated phosphorylation modulates receptor internalization. Phosphorylated by GRK2 in a agonist-dependent manner. Phosphorylation at Tyr-169 requires receptor activation, is dependent on non-receptor protein tyrosine kinase Src and results in a decrease in agonist efficacy by reducing G-protein coupling efficiency. Phosphorylated on tyrosine residues; the phosphorylation is involved in agonist-induced G-protein-independent receptor down-regulation. Phosphorylation at Ser-378 is involved in G-protein-dependent but not beta-arrestin-dependent activation of the ERK pathway. In terms of processing, ubiquitinated. A basal ubiquitination seems not to be related to degradation. Ubiquitination is increased upon formation of OPRM1:OPRD1 oligomers leading to proteasomal degradation; the ubiquitination is diminished by RTP4.

The protein localises to the cell membrane. It localises to the cell projection. The protein resides in the axon. Its subcellular location is the perikaryon. It is found in the dendrite. The protein localises to the endosome. In terms of biological role, receptor for endogenous opioids such as beta-endorphin and endomorphin. Receptor for natural and synthetic opioids including morphine, heroin, DAMGO, fentanyl, etorphine, buprenorphin and methadone. Also activated by enkephalin peptides, such as Met-enkephalin or Met-enkephalin-Arg-Phe, with higher affinity for Met-enkephalin-Arg-Phe. Agonist binding to the receptor induces coupling to an inactive GDP-bound heterotrimeric G-protein complex and subsequent exchange of GDP for GTP in the G-protein alpha subunit leading to dissociation of the G-protein complex with the free GTP-bound G-protein alpha and the G-protein beta-gamma dimer activating downstream cellular effectors. The agonist- and cell type-specific activity is predominantly coupled to pertussis toxin-sensitive G(i) and G(o) G alpha proteins, GNAI1, GNAI2, GNAI3 and GNAO1, and to a lesser extent to pertussis toxin-insensitive G alpha proteins GNAZ and GNA15. They mediate an array of downstream cellular responses, including inhibition of adenylate cyclase activity and both N-type and L-type calcium channels, activation of inward rectifying potassium channels, mitogen-activated protein kinase (MAPK), phospholipase C (PLC), phosphoinositide/protein kinase (PKC), phosphoinositide 3-kinase (PI3K) and regulation of NF-kappa-B. Also couples to adenylate cyclase stimulatory G alpha proteins. The selective temporal coupling to G-proteins and subsequent signaling can be regulated by RGSZ proteins, such as RGS9, RGS17 and RGS4. Phosphorylation by members of the GPRK subfamily of Ser/Thr protein kinases and association with beta-arrestins is involved in short-term receptor desensitization. Beta-arrestins associate with the GPRK-phosphorylated receptor and uncouple it from the G-protein thus terminating signal transduction. The phosphorylated receptor is internalized through endocytosis via clathrin-coated pits which involves beta-arrestins. The activation of the ERK pathway occurs either in a G-protein-dependent or a beta-arrestin-dependent manner and is regulated by agonist-specific receptor phosphorylation. Acts as a class A G-protein coupled receptor (GPCR) which dissociates from beta-arrestin at or near the plasma membrane and undergoes rapid recycling. Receptor down-regulation pathways are varying with the agonist and occur dependent or independent of G-protein coupling. Endogenous ligands induce rapid desensitization, endocytosis and recycling. Heterooligomerization with other GPCRs can modulate agonist binding, signaling and trafficking properties. Involved in neurogenesis. In Pan troglodytes (Chimpanzee), this protein is Mu-type opioid receptor (OPRM1).